Here is a 344-residue protein sequence, read N- to C-terminus: Glycerol-3-phosphate dehydrogenase [NAD(P)+] (344 aa).

4 residues coordinate NADPH: Ser18, Tyr19, His39, and Lys113. Sn-glycerol 3-phosphate contacts are provided by Lys113, Gly142, and Thr144. Ala146 serves as a coordination point for NADPH. Sn-glycerol 3-phosphate-binding residues include Lys198, Asp251, Ser261, Arg262, and Asn263. The active-site Proton acceptor is Lys198. Arg262 contributes to the NADPH binding site. Positions 286 and 288 each coordinate NADPH.

The protein belongs to the NAD-dependent glycerol-3-phosphate dehydrogenase family.

The protein localises to the cytoplasm. It carries out the reaction sn-glycerol 3-phosphate + NAD(+) = dihydroxyacetone phosphate + NADH + H(+). The enzyme catalyses sn-glycerol 3-phosphate + NADP(+) = dihydroxyacetone phosphate + NADPH + H(+). Its pathway is membrane lipid metabolism; glycerophospholipid metabolism. Catalyzes the reduction of the glycolytic intermediate dihydroxyacetone phosphate (DHAP) to sn-glycerol 3-phosphate (G3P), the key precursor for phospholipid synthesis. This is Glycerol-3-phosphate dehydrogenase [NAD(P)+] from Blochmanniella pennsylvanica (strain BPEN).